We begin with the raw amino-acid sequence, 140 residues long: MPPKAAEKKPSTGGKAPAGKAPAEKKEAGKKTAAAASGEKKKRGKTRKETYSSYIYKVLKQVHPDTGISTRAMSILNSFVNDIFERVATEASKLAAYNKKSTISSREIQTSVRLILPGELAKHAVSEGTKAVTKYSSSAK.

Residues 1–10 (MPPKAAEKKP) show a composition bias toward basic and acidic residues. The tract at residues 1–48 (MPPKAAEKKPSTGGKAPAGKAPAEKKEAGKKTAAAASGEKKKRGKTRK) is disordered. N6-acetyllysine; alternate occurs at positions 8 and 9. Glycyl lysine isopeptide (Lys-Gly) (interchain with G-Cter in SUMO); alternate cross-links involve residues Lys-8 and Lys-9. Low complexity predominate over residues 11–21 (STGGKAPAGKA). Lys-15 bears the N6-acetyllysine mark. Position 25 is an N6-acetyllysine; alternate (Lys-25). A Glycyl lysine isopeptide (Lys-Gly) (interchain with G-Cter in SUMO); alternate cross-link involves residue Lys-25. A Glycyl lysine isopeptide (Lys-Gly) (interchain with G-Cter in SUMO) cross-link involves residue Lys-26. Lys-134 participates in a covalent cross-link: Glycyl lysine isopeptide (Lys-Gly) (interchain with G-Cter in ubiquitin).

This sequence belongs to the histone H2B family. The nucleosome is a histone octamer containing two molecules each of H2A, H2B, H3 and H4 assembled in one H3-H4 heterotetramer and two H2A-H2B heterodimers. The octamer wraps approximately 147 bp of DNA. Post-translationally, monoubiquitinated by the ubc2-bre1 complex to form H2BK123ub1. H2BK123ub1 gives a specific tag for epigenetic transcriptional activation and is also prerequisite for H3K4me and H3K79me formation. H2BK123ub1 also modulates the formation of double-strand breaks during meiosis and is a prerequisite for DNA-damage checkpoint activation. In terms of processing, acetylated by gcn5 to form H2BK11ac and H2BK16ac. H2BK16ac can also be formed by esa1. Acetylation of N-terminal lysines and particularly formation of H2BK11acK16ac has a positive effect on transcription. Sumoylation to form H2BK6su or H2BK7su, and probably also H2BK16su or H2BK17su, occurs preferentially near the telomeres and represses gene transcription.

It is found in the nucleus. The protein resides in the chromosome. Its function is as follows. Core component of nucleosome. Nucleosomes wrap and compact DNA into chromatin, limiting DNA accessibility to the cellular machineries which require DNA as a template. Histones thereby play a central role in transcription regulation, DNA repair, DNA replication and chromosomal stability. DNA accessibility is regulated via a complex set of post-translational modifications of histones, also called histone code, and nucleosome remodeling. The chain is Histone H2B (htbA) from Emericella nidulans (strain FGSC A4 / ATCC 38163 / CBS 112.46 / NRRL 194 / M139) (Aspergillus nidulans).